A 427-amino-acid polypeptide reads, in one-letter code: 3-phosphoshikimate 1-carboxyvinyltransferase (427 aa).

Residues K22, S23, and R27 each contribute to the 3-phosphoshikimate site. K22 is a binding site for phosphoenolpyruvate. G94 and R122 together coordinate phosphoenolpyruvate. 3-phosphoshikimate contacts are provided by S165, Q167, D313, and K340. Q167 is a phosphoenolpyruvate binding site. The Proton acceptor role is filled by D313. Phosphoenolpyruvate is bound by residues R344 and R386.

The protein belongs to the EPSP synthase family. Monomer.

The protein localises to the cytoplasm. It catalyses the reaction 3-phosphoshikimate + phosphoenolpyruvate = 5-O-(1-carboxyvinyl)-3-phosphoshikimate + phosphate. Its pathway is metabolic intermediate biosynthesis; chorismate biosynthesis; chorismate from D-erythrose 4-phosphate and phosphoenolpyruvate: step 6/7. Its function is as follows. Catalyzes the transfer of the enolpyruvyl moiety of phosphoenolpyruvate (PEP) to the 5-hydroxyl of shikimate-3-phosphate (S3P) to produce enolpyruvyl shikimate-3-phosphate and inorganic phosphate. The polypeptide is 3-phosphoshikimate 1-carboxyvinyltransferase (Koribacter versatilis (strain Ellin345)).